The sequence spans 233 residues: Lipoprotein-releasing system ATP-binding protein LolD (233 aa).

An ABC transporter domain is found at 9–233; sequence LAINAVSKVF…GILSQSETHR (225 aa). 45–52 contributes to the ATP binding site; it reads GSSGSGKS.

This sequence belongs to the ABC transporter superfamily. Lipoprotein translocase (TC 3.A.1.125) family. As to quaternary structure, the complex is composed of two ATP-binding proteins (LolD) and two transmembrane proteins (LolC and LolE).

It localises to the cell inner membrane. In terms of biological role, part of the ABC transporter complex LolCDE involved in the translocation of mature outer membrane-directed lipoproteins, from the inner membrane to the periplasmic chaperone, LolA. Responsible for the formation of the LolA-lipoprotein complex in an ATP-dependent manner. The polypeptide is Lipoprotein-releasing system ATP-binding protein LolD (Shewanella denitrificans (strain OS217 / ATCC BAA-1090 / DSM 15013)).